The primary structure comprises 189 residues: Parkinson disease protein 7 (189 aa).

At Ala2 the chain carries N-acetylalanine. Residues Cys46 and Cys53 are each lipidated (S-palmitoyl cysteine). Position 67 is a phosphotyrosine (Tyr67). The Nucleophile role is filled by Cys106. The residue at position 106 (Cys106) is a Cysteine sulfinic acid (-SO2H); alternate. Cys106 is lipidated: S-palmitoyl cysteine; alternate. The active site involves His126. Residue Lys130 forms a Glycyl lysine isopeptide (Lys-Gly) (interchain with G-Cter in SUMO) linkage. Lys148 is modified (N6-acetyllysine). At Lys182 the chain carries N6-succinyllysine.

This sequence belongs to the peptidase C56 family. Homodimer. Binds EFCAB6/DJBP and PIAS2. Part of a ternary complex containing PARK7, EFCAB6/DJBP and AR. Interacts (via N-terminus) with OTUD7B. Interacts with BBS1, HIPK1, CLCF1 and MTERF. Forms a complex with PINK1 and PRKN. Interacts (via C-terminus) with NCF1; the interaction is enhanced by LPS and modulates NCF1 phosphorylation and membrane translocation. Interacts with NENF. Deglycase activity does not require glutathione as a cofactor, however, glycated glutathione constitutes a PARK7 substrate. is required as a cofactor. In terms of processing, sumoylated on Lys-130 by PIAS2 or PIAS4; which is enhanced after ultraviolet irradiation and essential for cell-growth promoting activity and transforming activity. Post-translationally, cys-106 is easily oxidized to sulfinic acid. Undergoes cleavage of a C-terminal peptide and subsequent activation of protease activity in response to oxidative stress. As to expression, highly expressed in pancreas, kidney, skeletal muscle, liver, testis and heart. Detected at slightly lower levels in placenta and brain (at protein level). Detected in astrocytes, Sertoli cells, spermatogonia, spermatids and spermatozoa. Expressed by pancreatic islets at higher levels than surrounding exocrine tissues.

The protein localises to the cell membrane. The protein resides in the cytoplasm. It is found in the nucleus. It localises to the membrane raft. Its subcellular location is the mitochondrion. The protein localises to the endoplasmic reticulum. It catalyses the reaction N(omega)-(1-hydroxy-2-oxopropyl)-L-arginyl-[protein] + H2O = lactate + L-arginyl-[protein] + H(+). The enzyme catalyses N(6)-(1-hydroxy-2-oxopropyl)-L-lysyl-[protein] + H2O = lactate + L-lysyl-[protein] + H(+). The catalysed reaction is S-(1-hydroxy-2-oxopropyl)-L-cysteinyl-[protein] + H2O = lactate + L-cysteinyl-[protein] + H(+). It carries out the reaction N(omega)-(1-hydroxy-2-oxoethyl)-L-arginyl-[protein] + H2O = L-arginyl-[protein] + glycolate + H(+). It catalyses the reaction N(6)-(1-hydroxy-2-oxoethyl)-L-lysyl-[protein] + H2O = glycolate + L-lysyl-[protein] + H(+). The enzyme catalyses S-(1-hydroxy-2-oxoethyl)-L-cysteinyl-[protein] + H2O = glycolate + L-cysteinyl-[protein] + H(+). The catalysed reaction is N(2)-(1-hydroxy-2-oxopropyl)-dGTP + H2O = lactate + dGTP + H(+). It carries out the reaction N(2)-(1-hydroxy-2-oxopropyl)-GTP + H2O = lactate + GTP + H(+). It catalyses the reaction N(2)-(1-hydroxy-2-oxopropyl)-GDP + H2O = lactate + GDP + H(+). The enzyme catalyses N(2)-(1-hydroxy-2-oxopropyl)-GMP + H2O = lactate + GMP + H(+). The catalysed reaction is N(2)-(1-hydroxy-2-oxoethyl)-dGTP + H2O = dGTP + glycolate + H(+). It carries out the reaction N(2)-(1-hydroxy-2-oxoethyl)-GTP + H2O = glycolate + GTP + H(+). It catalyses the reaction N(2)-(1-hydroxy-2-oxoethyl)-GDP + H2O = glycolate + GDP + H(+). The enzyme catalyses N(2)-(1-hydroxy-2-oxoethyl)-GMP + H2O = glycolate + GMP + H(+). The catalysed reaction is an N(2)-(1-hydroxy-2-oxopropyl)-guanosine in RNA + H2O = a guanosine in RNA + lactate + H(+). It carries out the reaction an N(2)-(1-hydroxy-2-oxopropyl)-2'-deoxyguanosine in DNA + H2O = a 2'-deoxyguanosine in DNA + lactate + H(+). It catalyses the reaction an N(2)-(1-hydroxy-2-oxoethyl)-guanosine in RNA + H2O = a guanosine in RNA + glycolate + H(+). The enzyme catalyses an N(2)-(1-hydroxy-2-oxoethyl)-2'-deoxyguanosine in DNA + H2O = a 2'-deoxyguanosine in DNA + glycolate + H(+). In terms of biological role, multifunctional protein with controversial molecular function which plays an important role in cell protection against oxidative stress and cell death acting as oxidative stress sensor and redox-sensitive chaperone and protease. It is involved in neuroprotective mechanisms like the stabilization of NFE2L2 and PINK1 proteins, male fertility as a positive regulator of androgen signaling pathway as well as cell growth and transformation through, for instance, the modulation of NF-kappa-B signaling pathway. Has been described as a protein and nucleotide deglycase that catalyzes the deglycation of the Maillard adducts formed between amino groups of proteins or nucleotides and reactive carbonyl groups of glyoxals. But this function is rebuted by other works. As a protein deglycase, repairs methylglyoxal- and glyoxal-glycated proteins, and releases repaired proteins and lactate or glycolate, respectively. Deglycates cysteine, arginine and lysine residues in proteins, and thus reactivates these proteins by reversing glycation by glyoxals. Acts on early glycation intermediates (hemithioacetals and aminocarbinols), preventing the formation of advanced glycation endproducts (AGE) that cause irreversible damage. Also functions as a nucleotide deglycase able to repair glycated guanine in the free nucleotide pool (GTP, GDP, GMP, dGTP) and in DNA and RNA. Is thus involved in a major nucleotide repair system named guanine glycation repair (GG repair), dedicated to reversing methylglyoxal and glyoxal damage via nucleotide sanitization and direct nucleic acid repair. Protects histones from adduction by methylglyoxal, controls the levels of methylglyoxal-derived argininine modifications on chromatin. Able to remove the glycations and restore histone 3, histone glycation disrupts both local and global chromatin architecture by altering histone-DNA interactions as well as histone acetylation and ubiquitination levels. Displays a very low glyoxalase activity that may reflect its deglycase activity. Eliminates hydrogen peroxide and protects cells against hydrogen peroxide-induced cell death. Required for correct mitochondrial morphology and function as well as for autophagy of dysfunctional mitochondria. Plays a role in regulating expression or stability of the mitochondrial uncoupling proteins SLC25A14 and SLC25A27 in dopaminergic neurons of the substantia nigra pars compacta and attenuates the oxidative stress induced by calcium entry into the neurons via L-type channels during pacemaking. Regulates astrocyte inflammatory responses, may modulate lipid rafts-dependent endocytosis in astrocytes and neuronal cells. In pancreatic islets, involved in the maintenance of mitochondrial reactive oxygen species (ROS) levels and glucose homeostasis in an age- and diet dependent manner. Protects pancreatic beta cells from cell death induced by inflammatory and cytotoxic setting. Binds to a number of mRNAs containing multiple copies of GG or CC motifs and partially inhibits their translation but dissociates following oxidative stress. Metal-binding protein able to bind copper as well as toxic mercury ions, enhances the cell protection mechanism against induced metal toxicity. In macrophages, interacts with the NADPH oxidase subunit NCF1 to direct NADPH oxidase-dependent ROS production, and protects against sepsis. The protein is Parkinson disease protein 7 of Homo sapiens (Human).